A 398-amino-acid chain; its full sequence is Dual-specificity RNA methyltransferase RlmN (398 aa).

Glutamate 119 acts as the Proton acceptor in catalysis. In terms of domain architecture, Radical SAM core spans 125-364 (DGDRATLCVS…TIVRKTRGDD (240 aa)). A disulfide bridge connects residues cysteine 132 and cysteine 369. 3 residues coordinate [4Fe-4S] cluster: cysteine 139, cysteine 143, and cysteine 146. Residues 193–194 (GE), serine 225, 247–249 (SLH), and asparagine 326 contribute to the S-adenosyl-L-methionine site. Cysteine 369 functions as the S-methylcysteine intermediate in the catalytic mechanism.

This sequence belongs to the radical SAM superfamily. RlmN family. The cofactor is [4Fe-4S] cluster.

It is found in the cytoplasm. It carries out the reaction adenosine(2503) in 23S rRNA + 2 reduced [2Fe-2S]-[ferredoxin] + 2 S-adenosyl-L-methionine = 2-methyladenosine(2503) in 23S rRNA + 5'-deoxyadenosine + L-methionine + 2 oxidized [2Fe-2S]-[ferredoxin] + S-adenosyl-L-homocysteine. It catalyses the reaction adenosine(37) in tRNA + 2 reduced [2Fe-2S]-[ferredoxin] + 2 S-adenosyl-L-methionine = 2-methyladenosine(37) in tRNA + 5'-deoxyadenosine + L-methionine + 2 oxidized [2Fe-2S]-[ferredoxin] + S-adenosyl-L-homocysteine. In terms of biological role, specifically methylates position 2 of adenine 2503 in 23S rRNA and position 2 of adenine 37 in tRNAs. m2A2503 modification seems to play a crucial role in the proofreading step occurring at the peptidyl transferase center and thus would serve to optimize ribosomal fidelity. The polypeptide is Dual-specificity RNA methyltransferase RlmN (Serratia proteamaculans (strain 568)).